The chain runs to 550 residues: Putative golgin subfamily A member 6-like protein 19 (550 aa).

Positions 1 to 11 (MWPQPRLPPHP) are enriched in pro residues. A disordered region spans residues 1 to 77 (MWPQPRLPPH…DSATGVYGEG (77 aa)). Positions 51-62 (NGSSPDTATSGG) are enriched in polar residues. The stretch at 157–405 (SKVEQLQDET…QERLRQQDER (249 aa)) forms a coiled coil. The span at 467 to 480 (KELEKSGGAEEPRG) shows a compositional bias: basic and acidic residues. A disordered region spans residues 467 to 529 (KELEKSGGAE…VGTGEAAGGA (63 aa)). Composition is skewed to low complexity over residues 484-499 (AAAA…PQGA) and 517-529 (GEAV…AGGA).

It belongs to the GOLGA6 family.

This Homo sapiens (Human) protein is Putative golgin subfamily A member 6-like protein 19 (GOLGA6L19).